The primary structure comprises 212 residues: Endothelin-1 (212 aa).

An N-terminal signal peptide occupies residues methionine 1 to glycine 17. Residues alanine 18–serine 50 constitute a propeptide that is removed on maturation. Intrachain disulfides connect cysteine 53-cysteine 67 and cysteine 55-cysteine 63. The propeptide occupies valine 74–tryptophan 212. Residues cysteine 109–cysteine 123 form an endothelin-like region. Composition is skewed to basic and acidic residues over residues arginine 168–threonine 181 and serine 189–valine 205. A disordered region spans residues arginine 168–tryptophan 212.

This sequence belongs to the endothelin/sarafotoxin family. As to expression, expressed in lung, placental stem villi vessels and in cultured placental vascular smooth muscle cells.

The protein resides in the secreted. In terms of biological role, endothelins are endothelium-derived vasoconstrictor peptides. Probable ligand for G-protein coupled receptors EDNRA and EDNRB which activates PTK2B, BCAR1, BCAR3 and, GTPases RAP1 and RHOA cascade in glomerular mesangial cells. Also binds the DEAR/FBXW7-AS1 receptor. Promotes mesenteric arterial wall remodeling via activation of ROCK signaling and subsequent colocalization of NFATC3 with F-actin filaments. NFATC3 then translocates to the nucleus where it subsequently promotes the transcription of the smooth muscle hypertrophy and differentiation marker ACTA2. This is Endothelin-1 (EDN1) from Homo sapiens (Human).